The primary structure comprises 412 residues: Homoserine dehydrogenase (412 aa).

Residues 9 to 16 (LGIGTVGG) and lysine 105 contribute to the NADP(+) site. Glutamate 190 provides a ligand contact to substrate. The active-site Proton donor is the lysine 205. Residues 330-407 (YLRLRAVDKP…ISGKVTRLRM (78 aa)) form the ACT domain.

The protein belongs to the homoserine dehydrogenase family.

It carries out the reaction L-homoserine + NADP(+) = L-aspartate 4-semialdehyde + NADPH + H(+). The enzyme catalyses L-homoserine + NAD(+) = L-aspartate 4-semialdehyde + NADH + H(+). It functions in the pathway amino-acid biosynthesis; L-methionine biosynthesis via de novo pathway; L-homoserine from L-aspartate: step 3/3. It participates in amino-acid biosynthesis; L-threonine biosynthesis; L-threonine from L-aspartate: step 3/5. The chain is Homoserine dehydrogenase (hom) from Methylobacillus glycogenes.